The sequence spans 284 residues: RNase adapter protein RapZ (284 aa).

8–15 (GRSGSGKS) is a binding site for ATP. 56-59 (DVRN) serves as a coordination point for GTP. An RNA-binding region spans residues 266 to 284 (RSRGKNVQSRHRTLEKRKP).

It belongs to the RapZ-like family. RapZ subfamily. As to quaternary structure, homotrimer.

Its function is as follows. Modulates the synthesis of GlmS, by affecting the processing and stability of the regulatory small RNA GlmZ. When glucosamine-6-phosphate (GlcN6P) concentrations are high in the cell, RapZ binds GlmZ and targets it to cleavage by RNase E. Consequently, GlmZ is inactivated and unable to activate GlmS synthesis. Under low GlcN6P concentrations, RapZ is sequestered and inactivated by an other regulatory small RNA, GlmY, preventing GlmZ degradation and leading to synthesis of GlmS. This is RNase adapter protein RapZ from Shigella boydii serotype 18 (strain CDC 3083-94 / BS512).